The following is a 400-amino-acid chain: Enoyl-[acyl-carrier-protein] reductase [NADH] (400 aa).

NAD(+) contacts are provided by residues 74–75, 111–112, and 139–140; these read FE, DA, and VA. Substrate is bound at residue Tyr225. The active-site Proton donor is the Tyr235. NAD(+) contacts are provided by residues Lys244 and 273-275; that span reads VVT.

It belongs to the TER reductase family. In terms of assembly, monomer.

It catalyses the reaction a 2,3-saturated acyl-[ACP] + NAD(+) = a (2E)-enoyl-[ACP] + NADH + H(+). Its pathway is lipid metabolism; fatty acid biosynthesis. In terms of biological role, involved in the final reduction of the elongation cycle of fatty acid synthesis (FAS II). Catalyzes the reduction of a carbon-carbon double bond in an enoyl moiety that is covalently linked to an acyl carrier protein (ACP). The chain is Enoyl-[acyl-carrier-protein] reductase [NADH] from Psychromonas ingrahamii (strain DSM 17664 / CCUG 51855 / 37).